A 188-amino-acid chain; its full sequence is uncharacterized protein (188 aa).

The helical transmembrane segment at 121 to 139 threads the bilayer; sequence IWLYGGASLITTFINLGLV.

To B.subtilis YwjB.

Its subcellular location is the membrane. This is an uncharacterized protein from Bacillus subtilis (strain 168).